The chain runs to 284 residues: MEMO1 family protein MmarC5_0191 (284 aa).

It belongs to the MEMO1 family.

The sequence is that of MEMO1 family protein MmarC5_0191 from Methanococcus maripaludis (strain C5 / ATCC BAA-1333).